The primary structure comprises 206 residues: MELKLLNANGQEGAGVSASDVVFGRDYNEALIHQVVVAYQANARSGNRAQKDREQVKHTTKKPWRQKGTGRARAGMSSSPLWRGGGRIFPNSPEENFSHKVNKKMHRAGLCSIFSQLAREGRISVVDELTLEAPKTKLLAEKFKAMGLDSVLVITDTVDENLYLASRNLAHVAVVEPRYADPLSLIYFKKILITKAAVAQIEELLS.

Positions R44 to S78 are disordered. Residues H58–G70 show a composition bias toward basic residues.

The protein belongs to the universal ribosomal protein uL4 family. In terms of assembly, part of the 50S ribosomal subunit.

One of the primary rRNA binding proteins, this protein initially binds near the 5'-end of the 23S rRNA. It is important during the early stages of 50S assembly. It makes multiple contacts with different domains of the 23S rRNA in the assembled 50S subunit and ribosome. Functionally, forms part of the polypeptide exit tunnel. This chain is Large ribosomal subunit protein uL4, found in Paraburkholderia phytofirmans (strain DSM 17436 / LMG 22146 / PsJN) (Burkholderia phytofirmans).